An 843-amino-acid chain; its full sequence is Major vault protein alpha (843 aa).

Ala-2 is modified (N-acetylalanine). MVP repeat units lie at residues 2–56 (ADLN…IPQR), 57–111 (NYCT…KVTA), 112–163 (LQVV…EEIK), 164–216 (ATII…EIVN), 217–272 (AYVL…GEVH), 273–324 (ITTL…IHNI), 325–376 (YVLT…KRES), 377–442 (IPLD…STRV), and 443–505 (VTYR…FLGP). The segment at 643 to 663 (QEAAARHEAERLEQGARGRLE) is disordered. Residues 646–663 (AARHEAERLEQGARGRLE) show a composition bias toward basic and acidic residues.

The vault ribonucleoprotein particle is a huge (400 A x 670 A) cage structure of 12.9 MDa. It consists of a dimer of half-vaults, with each half-vault comprising 39 identical major vault protein (MVP) chains. Dictyostelium is one of the few organisms in which the major component is actually two proteins (alpha and beta).

The protein resides in the cytoplasm. Its subcellular location is the nucleus. In terms of biological role, unknown, though MVP-alpha is required for normal vault structure. This is Major vault protein alpha (mvpA) from Dictyostelium discoideum (Social amoeba).